A 242-amino-acid chain; its full sequence is tRNA pseudouridine synthase A (242 aa).

Residue aspartate 51 is the Nucleophile of the active site. Tyrosine 107 is a binding site for substrate.

It belongs to the tRNA pseudouridine synthase TruA family. As to quaternary structure, homodimer.

It carries out the reaction uridine(38/39/40) in tRNA = pseudouridine(38/39/40) in tRNA. Functionally, formation of pseudouridine at positions 38, 39 and 40 in the anticodon stem and loop of transfer RNAs. The chain is tRNA pseudouridine synthase A from Helicobacter pylori (strain Shi470).